The primary structure comprises 350 residues: D-alanine--D-alanine ligase (350 aa).

The 204-residue stretch at 134–337 (KIFAAQRGVK…LPKKHSIKVS (204 aa)) folds into the ATP-grasp domain. 160–212 (IAYPIILKPARLGSSIGVSVINEEKELDYGRDLAFEYDDTIIAESFKSGVKEY) is a binding site for ATP. D289, E301, and N303 together coordinate Mg(2+).

The protein belongs to the D-alanine--D-alanine ligase family. Mg(2+) is required as a cofactor. Mn(2+) serves as cofactor.

It localises to the cytoplasm. It carries out the reaction 2 D-alanine + ATP = D-alanyl-D-alanine + ADP + phosphate + H(+). It participates in cell wall biogenesis; peptidoglycan biosynthesis. In terms of biological role, cell wall formation. The chain is D-alanine--D-alanine ligase from Helicobacter hepaticus (strain ATCC 51449 / 3B1).